The chain runs to 349 residues: tRNA pseudouridine synthase D (349 aa).

Phe-27 contacts substrate. Asp-80 functions as the Nucleophile in the catalytic mechanism. Asn-129 contributes to the substrate binding site. Positions 155–303 (GVPNYFGAQR…VEASRRAMLL (149 aa)) constitute a TRUD domain. Substrate is bound at residue Phe-329.

This sequence belongs to the pseudouridine synthase TruD family.

The catalysed reaction is uridine(13) in tRNA = pseudouridine(13) in tRNA. Responsible for synthesis of pseudouridine from uracil-13 in transfer RNAs. The chain is tRNA pseudouridine synthase D from Salmonella newport (strain SL254).